The sequence spans 506 residues: Anaerobic nitric oxide reductase transcription regulator NorR (506 aa).

The residue at position 57 (Asp57) is a 4-aspartylphosphate. Residues 187–416 form the Sigma-54 factor interaction domain; it reads MIGLSPAMTQ…LEHAIHRAVV (230 aa). Residues 215-222 and 278-287 each bind ATP; these read GETGTGKE and ADNGTLFLDE. Positions 481 to 500 form a DNA-binding region, H-T-H motif; the sequence is WAASARALETDVANLHRLAK.

It functions in the pathway nitrogen metabolism; nitric oxide reduction. Required for the expression of anaerobic nitric oxide (NO) reductase, acts as a transcriptional activator for at least the norVW operon. Activation also requires sigma-54. The polypeptide is Anaerobic nitric oxide reductase transcription regulator NorR (Salmonella gallinarum (strain 287/91 / NCTC 13346)).